The following is a 475-amino-acid chain: Aspartyl/glutamyl-tRNA(Asn/Gln) amidotransferase subunit B (475 aa).

It belongs to the GatB/GatE family. GatB subfamily. In terms of assembly, heterotrimer of A, B and C subunits.

The enzyme catalyses L-glutamyl-tRNA(Gln) + L-glutamine + ATP + H2O = L-glutaminyl-tRNA(Gln) + L-glutamate + ADP + phosphate + H(+). It carries out the reaction L-aspartyl-tRNA(Asn) + L-glutamine + ATP + H2O = L-asparaginyl-tRNA(Asn) + L-glutamate + ADP + phosphate + 2 H(+). Functionally, allows the formation of correctly charged Asn-tRNA(Asn) or Gln-tRNA(Gln) through the transamidation of misacylated Asp-tRNA(Asn) or Glu-tRNA(Gln) in organisms which lack either or both of asparaginyl-tRNA or glutaminyl-tRNA synthetases. The reaction takes place in the presence of glutamine and ATP through an activated phospho-Asp-tRNA(Asn) or phospho-Glu-tRNA(Gln). In Staphylococcus aureus (strain COL), this protein is Aspartyl/glutamyl-tRNA(Asn/Gln) amidotransferase subunit B.